A 235-amino-acid chain; its full sequence is RING-H2 finger protein ATL33 (235 aa).

Residues leucine 64–asparagine 84 form a helical membrane-spanning segment. Residues cysteine 87 to threonine 133 form a disordered region. Positions serine 88 to serine 103 are enriched in low complexity. A compositionally biased stretch (polar residues) spans isoleucine 116 to serine 125. The segment at cysteine 142–arginine 184 adopts an RING-type; atypical zinc-finger fold. The segment covering asparagine 201 to serine 216 has biased composition (low complexity). The tract at residues asparagine 201 to valine 235 is disordered.

It belongs to the RING-type zinc finger family. ATL subfamily.

The protein resides in the membrane. The enzyme catalyses S-ubiquitinyl-[E2 ubiquitin-conjugating enzyme]-L-cysteine + [acceptor protein]-L-lysine = [E2 ubiquitin-conjugating enzyme]-L-cysteine + N(6)-ubiquitinyl-[acceptor protein]-L-lysine.. The protein operates within protein modification; protein ubiquitination. This chain is RING-H2 finger protein ATL33 (ATL33), found in Arabidopsis thaliana (Mouse-ear cress).